The sequence spans 377 residues: Phosphatidylglycerol--prolipoprotein diacylglyceryl transferase (377 aa).

4 helical membrane-spanning segments follow: residues 18 to 38, 48 to 68, 93 to 113, and 119 to 139; these read PVPL…AVVV, MDPA…IVGA, IWNG…GAWL, and GISL…AQAI. R141 serves as a coordination point for a 1,2-diacyl-sn-glycero-3-phospho-(1'-sn-glycerol). Helical transmembrane passes span 177 to 197, 208 to 228, and 238 to 258; these read QPTF…LLLV, LFAL…MLRI, and RVNI…LLVV. Residues 265–377 are disordered; sequence DVSPQEQRAL…RTRVERPPAT (113 aa). Low complexity-rich tracts occupy residues 288–297 and 308–344; these read AAGETAGETR and GVDV…DADG.

The protein belongs to the Lgt family.

It is found in the cell membrane. The catalysed reaction is L-cysteinyl-[prolipoprotein] + a 1,2-diacyl-sn-glycero-3-phospho-(1'-sn-glycerol) = an S-1,2-diacyl-sn-glyceryl-L-cysteinyl-[prolipoprotein] + sn-glycerol 1-phosphate + H(+). It participates in protein modification; lipoprotein biosynthesis (diacylglyceryl transfer). Catalyzes the transfer of the diacylglyceryl group from phosphatidylglycerol to the sulfhydryl group of the N-terminal cysteine of a prolipoprotein, the first step in the formation of mature lipoproteins. This is Phosphatidylglycerol--prolipoprotein diacylglyceryl transferase from Frankia alni (strain DSM 45986 / CECT 9034 / ACN14a).